A 332-amino-acid polypeptide reads, in one-letter code: UDP-N-acetylenolpyruvoylglucosamine reductase (332 aa).

The FAD-binding PCMH-type domain maps to 55–221 (VGGAADLYVA…TQATLQLAPG (167 aa)). Arg200 is an active-site residue. The Proton donor role is filled by Ser251. Glu321 is a catalytic residue.

Belongs to the MurB family. FAD is required as a cofactor.

The protein localises to the cytoplasm. The catalysed reaction is UDP-N-acetyl-alpha-D-muramate + NADP(+) = UDP-N-acetyl-3-O-(1-carboxyvinyl)-alpha-D-glucosamine + NADPH + H(+). The protein operates within cell wall biogenesis; peptidoglycan biosynthesis. Its function is as follows. Cell wall formation. In Nostoc punctiforme (strain ATCC 29133 / PCC 73102), this protein is UDP-N-acetylenolpyruvoylglucosamine reductase.